The following is a 1405-amino-acid chain: DNA-directed RNA polymerase subunit beta' (1405 aa).

4 residues coordinate Zn(2+): Cys-71, Cys-73, Cys-86, and Cys-89. Residues Asp-462, Asp-464, and Asp-466 each contribute to the Mg(2+) site. Positions 820, 893, 900, and 903 each coordinate Zn(2+).

This sequence belongs to the RNA polymerase beta' chain family. In terms of assembly, the RNAP catalytic core consists of 2 alpha, 1 beta, 1 beta' and 1 omega subunit. When a sigma factor is associated with the core the holoenzyme is formed, which can initiate transcription. The cofactor is Mg(2+). It depends on Zn(2+) as a cofactor.

It catalyses the reaction RNA(n) + a ribonucleoside 5'-triphosphate = RNA(n+1) + diphosphate. In terms of biological role, DNA-dependent RNA polymerase catalyzes the transcription of DNA into RNA using the four ribonucleoside triphosphates as substrates. The chain is DNA-directed RNA polymerase subunit beta' from Methylorubrum populi (strain ATCC BAA-705 / NCIMB 13946 / BJ001) (Methylobacterium populi).